Here is a 416-residue protein sequence, read N- to C-terminus: Enolase (416 aa).

Residue Gln-162 participates in (2R)-2-phosphoglycerate binding. Glu-204 serves as the catalytic Proton donor. Mg(2+)-binding residues include Asp-241, Glu-282, and Asp-309. Positions 334, 363, 364, and 385 each coordinate (2R)-2-phosphoglycerate. Lys-334 acts as the Proton acceptor in catalysis.

The protein belongs to the enolase family. Mg(2+) is required as a cofactor.

The protein localises to the cytoplasm. The protein resides in the secreted. Its subcellular location is the cell surface. The catalysed reaction is (2R)-2-phosphoglycerate = phosphoenolpyruvate + H2O. Its pathway is carbohydrate degradation; glycolysis; pyruvate from D-glyceraldehyde 3-phosphate: step 4/5. Catalyzes the reversible conversion of 2-phosphoglycerate (2-PG) into phosphoenolpyruvate (PEP). It is essential for the degradation of carbohydrates via glycolysis. In Campylobacter concisus (strain 13826), this protein is Enolase.